The following is a 610-amino-acid chain: Elongation factor 4 (610 aa).

In terms of domain architecture, tr-type G spans 13–195 (SHIRNFSIVA…AIVRKLPAPK (183 aa)). GTP contacts are provided by residues 25 to 30 (DHGKST) and 142 to 145 (NKID).

Belongs to the TRAFAC class translation factor GTPase superfamily. Classic translation factor GTPase family. LepA subfamily.

The protein localises to the cell inner membrane. The catalysed reaction is GTP + H2O = GDP + phosphate + H(+). Its function is as follows. Required for accurate and efficient protein synthesis under certain stress conditions. May act as a fidelity factor of the translation reaction, by catalyzing a one-codon backward translocation of tRNAs on improperly translocated ribosomes. Back-translocation proceeds from a post-translocation (POST) complex to a pre-translocation (PRE) complex, thus giving elongation factor G a second chance to translocate the tRNAs correctly. Binds to ribosomes in a GTP-dependent manner. The protein is Elongation factor 4 of Rhizobium etli (strain CIAT 652).